We begin with the raw amino-acid sequence, 323 residues long: Phosphatidylethanolamine:ceramide ethanolaminephosphotransferase (323 aa).

At 1 to 26 (MAVPPVEMYSGSFWNRMRKPLPLRTQ) the chain is on the cytoplasmic side. The chain crosses the membrane as a helical span at residues 27 to 47 (VIRFTVVFVIVSFILVVALQI). The Extracellular segment spans residues 48–74 (THERMPDPKVTKPLPDLGFELLTKVPG). Residues 75–95 (MYVLADCCIGFLNILSVFTAF) form a helical membrane-spanning segment. The Cytoplasmic segment spans residues 96–147 (KLYLLHRHCVGSGEPELPCNIPGVSRFFLSVWLCKENCRIELRNIHTIAWIR). Residues 148-168 (FITSYALLLLSRSIIMVVTSL) form a helical membrane-spanning segment. Topologically, residues 169–187 (PNPDDLCQNPPKIENRVKD) are extracellular. A helical membrane pass occupies residues 188-208 (ILLTVLTAGAGSIHCGDLMYS). Residues 209-233 (GHTVILTLHLMFHWIYGAMVHWSFR) lie on the Cytoplasmic side of the membrane. A helical transmembrane segment spans residues 234–254 (PVVTVVAIFGYYCIVASRFHY). Residues 255–257 (TDD) lie on the Extracellular side of the membrane. A helical membrane pass occupies residues 258–278 (VLVAIYLTIATFIAVGHNADG). At 279–323 (APWQLQLFIRWWPCCGANSREVAEDGVPVAIVIKNEEMMNFEGKS) the chain is on the cytoplasmic side.

The protein belongs to the sphingomyelin synthase family.

It localises to the membrane. The enzyme catalyses an N-acylsphing-4-enine + a 1,2-diacyl-sn-glycero-3-phosphoethanolamine = an N-acylsphing-4-enine 1-phosphoethanolamine + a 1,2-diacyl-sn-glycerol. The catalysed reaction is an N-acylsphinganine + a 1,2-diacyl-sn-glycero-3-phosphoethanolamine = an N-acylsphinganine-1-phosphoethanolamine + a 1,2-diacyl-sn-glycerol. Functionally, predominantly synthesizes ethanolamine-phosphorylceramide (EPC), with minimal sphingomyelin (SM)/inositol phosphorylceramide (IPC) synthase activity. Specificity is likely to be defined by residues in the lumenal catalytic domain that interact with the polar head groups of the phospholipid donors. EPC is synthesized by both stages of the parasite life cycle, bloodstream forms (BSF) and procyclic forms (PCF), by transferring the phosphoethanolamine from a 1,2-diacyl-sn-glycero-3-phosphoethanolamine to an N-acylsphing-4-enine (ceramide) or an N-acylsphinganine (dihydroceramide). Similarly, SM is synthesized by transferring the phosphocholine from a 1,2-diacyl-sn-glycero-3-phosphocholine to ceramide or dihydroceramide by BSF and PCF, while IPC is confined to PCF. The ceramide/dihydroceramide ratios are skewed towards dihydroceramide in PCF parasites and ceramide in BSF parasites, this is likely due to differential expression and/or regulation of dihydroceramide desaturase, the enzyme responsible for converting dihydroceramide to ceramide. This Trypanosoma brucei brucei protein is Phosphatidylethanolamine:ceramide ethanolaminephosphotransferase.